Consider the following 59-residue polypeptide: U17-myrmicitoxin-Tb1f (59 aa).

The N-terminal stretch at 1-27 is a signal peptide; the sequence is MEKNRTTTFSVYLTIILFLISTFITMV. Residues 28–31 constitute a propeptide that is removed on maturation; it reads ITES. His58 bears the Histidine amide mark.

Expressed by the venom gland.

The protein resides in the secreted. This is U17-myrmicitoxin-Tb1f from Tetramorium bicarinatum (Tramp ant).